The sequence spans 217 residues: Pyrophosphatase PpaX (217 aa).

The active-site Nucleophile is Asp11.

The protein belongs to the HAD-like hydrolase superfamily. PpaX family. Requires Mg(2+) as cofactor.

It catalyses the reaction diphosphate + H2O = 2 phosphate + H(+). Functionally, hydrolyzes pyrophosphate formed during P-Ser-HPr dephosphorylation by HPrK/P. Might play a role in controlling the intracellular pyrophosphate pool. The sequence is that of Pyrophosphatase PpaX from Listeria monocytogenes serotype 4b (strain CLIP80459).